Reading from the N-terminus, the 44-residue chain is Large ribosomal subunit protein bL34 (44 aa).

2 stretches are compositionally biased toward basic residues: residues 1–22 and 31–44; these read MKRT…RARM and IRAR…RLSV. The disordered stretch occupies residues 1–44; it reads MKRTLGGTSRKRKRTSGFRARMRTPDGRNVIRARRKKGRHRLSV.

It belongs to the bacterial ribosomal protein bL34 family.

This is Large ribosomal subunit protein bL34 from Nostoc punctiforme (strain ATCC 29133 / PCC 73102).